The primary structure comprises 175 residues: uncharacterized protein (175 aa).

The Macro domain maps to 1–173; sequence MYKNIIKLIS…VYKEKYKKLL (173 aa).

This sequence belongs to the MacroD-type family.

This is an uncharacterized protein from Fusobacterium nucleatum subsp. nucleatum (strain ATCC 25586 / DSM 15643 / BCRC 10681 / CIP 101130 / JCM 8532 / KCTC 2640 / LMG 13131 / VPI 4355).